We begin with the raw amino-acid sequence, 156 residues long: MTGKRELRVKPIVNGTVIDHITSGQSLNVLKILGINAASRYVVSVLMNVPSGEMKGKDVVKIENRELDPEELDSIALIAPRATINIIRNYEVVGKHRVDPPREVSGLVRCGNPNCISNTNEPVTSRFTVERTGDDIQLRCSYCEYVIDQEIADHLL.

The Zn(2+) site is built by cysteine 110, cysteine 115, cysteine 140, and cysteine 143.

Belongs to the PyrI family. In terms of assembly, contains catalytic and regulatory chains. The cofactor is Zn(2+).

In terms of biological role, involved in allosteric regulation of aspartate carbamoyltransferase. The protein is Aspartate carbamoyltransferase regulatory chain of Methanocella arvoryzae (strain DSM 22066 / NBRC 105507 / MRE50).